A 125-amino-acid polypeptide reads, in one-letter code: Cu-Zn superoxide dismutase-like protein (125 aa).

Cysteine 52 and cysteine 102 are oxidised to a cystine.

Belongs to the Cu-Zn superoxide dismutase family.

It is found in the host cytoplasm. In terms of biological role, virion protein with no enzymatic activity. This is Cu-Zn superoxide dismutase-like protein from Bos taurus (Bovine).